Here is a 264-residue protein sequence, read N- to C-terminus: Adenosylcobinamide-GDP ribazoletransferase (264 aa).

Transmembrane regions (helical) follow at residues 10-30, 43-63, 113-133, 141-161, 183-203, 205-225, and 243-263; these read LFFI…VGYT, LVGA…AQVW, LGSY…VALY, VQAL…PVAL, VSDA…AAAW, LGAS…LAAF, and GAAQ…GVWF.

This sequence belongs to the CobS family. Mg(2+) is required as a cofactor.

The protein resides in the cell inner membrane. It carries out the reaction alpha-ribazole + adenosylcob(III)inamide-GDP = adenosylcob(III)alamin + GMP + H(+). The enzyme catalyses alpha-ribazole 5'-phosphate + adenosylcob(III)inamide-GDP = adenosylcob(III)alamin 5'-phosphate + GMP + H(+). It functions in the pathway cofactor biosynthesis; adenosylcobalamin biosynthesis; adenosylcobalamin from cob(II)yrinate a,c-diamide: step 7/7. Functionally, joins adenosylcobinamide-GDP and alpha-ribazole to generate adenosylcobalamin (Ado-cobalamin). Also synthesizes adenosylcobalamin 5'-phosphate from adenosylcobinamide-GDP and alpha-ribazole 5'-phosphate. This Leptothrix cholodnii (strain ATCC 51168 / LMG 8142 / SP-6) (Leptothrix discophora (strain SP-6)) protein is Adenosylcobinamide-GDP ribazoletransferase.